The chain runs to 331 residues: Ketol-acid reductoisomerase (NADP(+)) (331 aa).

The KARI N-terminal Rossmann domain occupies 3 to 183 (AQMYYDDDAD…GGTRAGALKT (181 aa)). NADP(+) is bound by residues 26-29 (YGSQ), S52, and S54. Residue H109 is part of the active site. G135 is an NADP(+) binding site. One can recognise a KARI C-terminal knotted domain in the interval 184 to 329 (TFKEETETDL…TELRSLMSWL (146 aa)). D192, E196, E228, and E232 together coordinate Mg(2+). S253 lines the substrate pocket.

The protein belongs to the ketol-acid reductoisomerase family. Mg(2+) serves as cofactor.

The enzyme catalyses (2R)-2,3-dihydroxy-3-methylbutanoate + NADP(+) = (2S)-2-acetolactate + NADPH + H(+). It carries out the reaction (2R,3R)-2,3-dihydroxy-3-methylpentanoate + NADP(+) = (S)-2-ethyl-2-hydroxy-3-oxobutanoate + NADPH + H(+). It participates in amino-acid biosynthesis; L-isoleucine biosynthesis; L-isoleucine from 2-oxobutanoate: step 2/4. It functions in the pathway amino-acid biosynthesis; L-valine biosynthesis; L-valine from pyruvate: step 2/4. Functionally, involved in the biosynthesis of branched-chain amino acids (BCAA). Catalyzes an alkyl-migration followed by a ketol-acid reduction of (S)-2-acetolactate (S2AL) to yield (R)-2,3-dihydroxy-isovalerate. In the isomerase reaction, S2AL is rearranged via a Mg-dependent methyl migration to produce 3-hydroxy-3-methyl-2-ketobutyrate (HMKB). In the reductase reaction, this 2-ketoacid undergoes a metal-dependent reduction by NADPH to yield (R)-2,3-dihydroxy-isovalerate. The polypeptide is Ketol-acid reductoisomerase (NADP(+)) (Thermobifida fusca (strain YX)).